The chain runs to 384 residues: uncharacterized protein (384 aa).

This is an uncharacterized protein from Acanthamoeba polyphaga (Amoeba).